Here is a 470-residue protein sequence, read N- to C-terminus: Putative multidrug resistance protein MdtD (470 aa).

Topologically, residues 1 to 11 are periplasmic; that stretch reads MTEFPDNTRWQ. A helical transmembrane segment spans residues 12–32; it reads LWIVAFGFFMQSLDTTIVNTA. Residues 33–48 lie on the Cytoplasmic side of the membrane; sequence LPSMAKSLGESPLHMH. A helical transmembrane segment spans residues 49-69; that stretch reads MVVVSYVLTVAVMLPASGWLA. The Periplasmic portion of the chain corresponds to 70-76; sequence DKIGVRN. The chain crosses the membrane as a helical span at residues 77 to 97; that stretch reads IFFAAIVLFTLGSLFCALSGT. The Cytoplasmic segment spans residues 98-101; it reads LNQL. Residues 102–124 form a helical membrane-spanning segment; the sequence is VLARVLQGVGGAMMVPVGRLTVM. The Periplasmic portion of the chain corresponds to 125–137; the sequence is KIVPRAQYMAAMT. The helical transmembrane segment at 138 to 158 threads the bilayer; it reads FVALPGQIGPLLGPALGGVLV. Residues 159–164 lie on the Cytoplasmic side of the membrane; sequence EYASWH. A helical transmembrane segment spans residues 165–185; sequence WIFLINIPVGIVGAMATFMLM. Over 186–196 the chain is Periplasmic; it reads PNYTIETRRFD. A helical transmembrane segment spans residues 197 to 217; that stretch reads LPGFLLLAIGMAVLTLALDGS. Over 218–224 the chain is Cytoplasmic; sequence KSMGISP. Residues 225–245 form a helical membrane-spanning segment; the sequence is WTLAGLAAGGAAAILLYLFHA. The Periplasmic portion of the chain corresponds to 246–262; sequence KKNSGALFSLRLFRTPT. Residues 263-283 form a helical membrane-spanning segment; that stretch reads FSLGLLGSFAGRIGSGMLPFM. The Cytoplasmic segment spans residues 284-285; that stretch reads TP. A helical transmembrane segment spans residues 286–306; sequence VFLQIGLGFSPFHAGLMMIPM. At 307-341 the chain is on the periplasmic side; the sequence is VLGSMGMKRIVVQIVNRFGYRRVLVATTLGLALVS. A helical membrane pass occupies residues 342 to 362; it reads LLFMSVALLGWYYLLPLVLLL. Topologically, residues 363 to 395 are cytoplasmic; that stretch reads QGMVNSARFSSMNTLTLKDLPDTLASSGNSLLS. The helical transmembrane segment at 396–416 threads the bilayer; sequence MIMQLSMSIGVTIAGMLLGMF. Topologically, residues 417–430 are periplasmic; sequence GQQHIGIDSSATHH. The chain crosses the membrane as a helical span at residues 431–451; that stretch reads VFMYTWLCMAVIIALPAIIFA. The Cytoplasmic segment spans residues 452-470; it reads RVPNDTQQNMVISRRKRSL.

It belongs to the major facilitator superfamily. TCR/Tet family.

The protein resides in the cell inner membrane. The polypeptide is Putative multidrug resistance protein MdtD (Salmonella typhi).